Reading from the N-terminus, the 1164-residue chain is MEYPGIKVDTVTSGIQRRVKGRIAKTNLNVSLASKIKAKILNNSSIFKISLKHNNRALARALSKEKENSRRITTEKMQLQKEVEKLNFENTFLRLKLNTLNKKLVEIESHVSNDLLTAIEISSLSEFHQGSFLLSATKKQRNSKQCKPAHLPYARVLLTSENDDDDGADDKWQTKCNNRTISKTSPDSTSSVSRQPSSLHQCNLKAFPPKEDNQKTCGSGHLEHTSSVDILPNESHSDQSPKSSLSEMKTAPSPSLRREKLSHGNVTMRKKCVSSTPDILYVTDLDHQPTSSPGSNWNNEIHGHTNETSNNTQRNAECFLDLPSESSSEPDAKRMELVQKNTDSFHFQKTVYDAADMELTATDIGKIVAVSKSKKNQNKKKADCRKETFRKVKGASSDKKRESSKRECKDGSEVGAEEEADAARAERGAGVLDGRGDSEEPNCISSTEQPSQVNTQKKRTLQNSSDQENIQNTKRRQTYTTDEQEETNPFSRHSVKFLQDGKFDLCQKTLHHNLSKPSRQTFVIRKSEKDNLFPNQEDKDTISENLEVTNEFHIDDLSIEANENVCDHETQTMLDLKKSVSAQQNQTKINKTKQKINRRTKIISVMSQVYEDNDKDIHVLEKDNFPFHTQANKETTSGNLESSKEFESPLLFTRDNGSLRDCKTQNVLDLHKQIPDLYPDRNESQISKIPRQKVNRKTEVISGVKCFSNDQGVHCSEKDKSLLLQKDKDFPGTLKDLSEFDTPAFCNKDSAKSCDYKSEMLLGLKKHDPNMQPACQDDSKAGKKLRQKVNRKTEIISKITQIHENDRGSTHDSLNKKLCQKVNISKIISQMNQIYETINEDGNGFKSSIKDCEDIKSCDFGEINSNKKENYDPIQDPCTLVKKTKRKGSCKAGSSLAGAKNRCGLQLTDSSQVQSVPLDSGLRHHPNEADSGPGEQTNLPKMQKQSAGRSLGDAFSVSLGKEGSRPAKAVSKMTPKSKKRKLPLGCSPETHGTVEITPNTDLAKAVDSQQTEKENYLEKEKIAKRKPDFCTKVLKPLSETCSSNIKNSSLDSMCKSSLPLSISSRKTLMLEESSSLESTCIFQVGDAAHEKITTGTRNPHHRTQKSTPGSRTSLVLVDTSSVSDTNPANPENESEGQSSHPMRRKRQCVPLNLTEPSLRSKMRR.

Residues 62–113 are a coiled coil; sequence LSKEKENSRRITTEKMQLQKEVEKLNFENTFLRLKLNTLNKKLVEIESHVSN. 5 disordered regions span residues 160–269, 287–314, 390–492, 521–541, and 917–992; these read SEND…VTMR, HQPT…NTQR, RKVK…PFSR, TFVI…DKDT, and PLDS…ETHG. The span at 182–198 shows a compositional bias: low complexity; sequence SKTSPDSTSSVSRQPSS. Composition is skewed to polar residues over residues 238 to 247 and 288 to 299; these read DQSPKSSLSE and QPTSSPGSNWNN. A compositionally biased stretch (basic and acidic residues) spans 390 to 412; that stretch reads RKVKGASSDKKRESSKRECKDGS. The segment covering 443-472 has biased composition (polar residues); sequence CISSTEQPSQVNTQKKRTLQNSSDQENIQN. The span at 525–541 shows a compositional bias: basic and acidic residues; the sequence is RKSEKDNLFPNQEDKDT. Residues 934 to 948 are compositionally biased toward polar residues; the sequence is GEQTNLPKMQKQSAG. Serine 1042 bears the Phosphoserine mark. Residues 1092–1164 form a disordered region; sequence ITTGTRNPHH…EPSLRSKMRR (73 aa). Over residues 1112–1125 the composition is skewed to low complexity; it reads TSLVLVDTSSVSDT. Over residues 1126–1140 the composition is skewed to polar residues; it reads NPANPENESEGQSSH.

It belongs to the shugoshin family. In terms of assembly, part of an astrin (SPAG5)-kinastrin (SKAP) complex containing KNSTRN, SPAG5, PLK1, DYNLL1 and SGO2A. Interacts with CDCA8. Interacts with PPP2CA. In terms of tissue distribution, ubiquitously expressed in proliferating cells. Highly expressed in the testis and oocytes.

The protein resides in the nucleus. It is found in the chromosome. It localises to the centromere. The protein localises to the kinetochore. In terms of biological role, cooperates with PPP2CA to protect centromeric cohesin from separase-mediated cleavage in oocytes specifically during meiosis I. Has a crucial role in protecting REC8 at centromeres from cleavage by separase. During meiosis, protects centromeric cohesion complexes until metaphase II/anaphase II transition, preventing premature release of meiosis-specific REC8 cohesin complexes from anaphase I centromeres. Is thus essential for an accurate gametogenesis. May act by targeting PPP2CA to centromeres, thus leading to cohesin dephosphorylation. Essential for recruiting KIF2C to the inner centromere and for correcting defective kinetochore attachments. Involved in centromeric enrichment of AUKRB in prometaphase. This Mus musculus (Mouse) protein is Shugoshin 2A.